The primary structure comprises 209 residues: Small ribosomal subunit protein uS3c (209 aa).

The KH type-2 domain occupies 39-109; it reads IRSCIEKQLH…QIRINLIEIT (71 aa).

Belongs to the universal ribosomal protein uS3 family. Part of the 30S ribosomal subunit.

The protein localises to the plastid. It is found in the chloroplast. In Gracilaria tenuistipitata (Red alga), this protein is Small ribosomal subunit protein uS3c (rps3).